We begin with the raw amino-acid sequence, 250 residues long: Sugar fermentation stimulation protein homolog (250 aa).

The protein belongs to the SfsA family.

The protein is Sugar fermentation stimulation protein homolog of Trichodesmium erythraeum (strain IMS101).